Here is a 245-residue protein sequence, read N- to C-terminus: MTAPLTLVLIPARMAATRLPGKPLLDIGGVPMIVHVLRRALAASIGRVAVATDTPEIAEAVIAHGGEVVMTRADHPSGSDRIHEALQTLDPERRIETVINLQGDFPTIRPEQIGAVLAPLADPAVDIATLAAEIHTEEESTNPNVVKVVGSPIRDNLLRALYFTRATAPYGDGPRYHHIGLYAYRRAALERFVSLPPSPLEQREKLEQLRALEAGMRIDVGIVDSVPRGVDTPADLETARRALGF.

Belongs to the KdsB family.

The protein localises to the cytoplasm. It catalyses the reaction 3-deoxy-alpha-D-manno-oct-2-ulosonate + CTP = CMP-3-deoxy-beta-D-manno-octulosonate + diphosphate. It functions in the pathway nucleotide-sugar biosynthesis; CMP-3-deoxy-D-manno-octulosonate biosynthesis; CMP-3-deoxy-D-manno-octulosonate from 3-deoxy-D-manno-octulosonate and CTP: step 1/1. It participates in bacterial outer membrane biogenesis; lipopolysaccharide biosynthesis. Functionally, activates KDO (a required 8-carbon sugar) for incorporation into bacterial lipopolysaccharide in Gram-negative bacteria. This chain is 3-deoxy-manno-octulosonate cytidylyltransferase, found in Rhodopseudomonas palustris (strain BisB5).